We begin with the raw amino-acid sequence, 87 residues long: uncharacterized protein (87 aa).

To H.pylori HP0495/JHP0447.

This is an uncharacterized protein from Campylobacter jejuni subsp. jejuni serotype O:2 (strain ATCC 700819 / NCTC 11168).